We begin with the raw amino-acid sequence, 353 residues long: MHLRHLFSPRLRGSLLLGSLLVASSFSTLAAEDMLRKAVGKGAYEMAWSQQENALWLATSQSRKLDKGGVVYRLDPVTLEITQAIHNDLKPFGATINAATQTLWFGNTINSAVTAIDAKTGDVKGRLVLDARKRTEEVRPLQPRELVADAATNTIYISGVGKESAIWVVDGETIKLKTTIENTGKMSTGLALDSKAQRLYTTNADGEFITIDTASNKILSRKKLLDDGKEHFFINLSLDTAGHRAFITDSKATEVLVVDTRNGNILAKIAAPASLAVLFNPTRNEAYVTHRQAGQVSVIDAKTYNVVKTFDTPTYPNSLALSADGKTLYVSVKQKSTREQEATQPDDVIRIAL.

The signal sequence occupies residues 1-30 (MHLRHLFSPRLRGSLLLGSLLVASSFSTLA).

This is an uncharacterized protein from Salmonella typhimurium (strain LT2 / SGSC1412 / ATCC 700720).